The sequence spans 150 residues: Deoxyuridine 5'-triphosphate nucleotidohydrolase (150 aa).

Residues 67–69 (RSS), asparagine 80, and 84–86 (VID) each bind substrate.

This sequence belongs to the dUTPase family. The cofactor is Mg(2+).

The enzyme catalyses dUTP + H2O = dUMP + diphosphate + H(+). Its pathway is pyrimidine metabolism; dUMP biosynthesis; dUMP from dCTP (dUTP route): step 2/2. Functionally, this enzyme is involved in nucleotide metabolism: it produces dUMP, the immediate precursor of thymidine nucleotides and it decreases the intracellular concentration of dUTP so that uracil cannot be incorporated into DNA. The chain is Deoxyuridine 5'-triphosphate nucleotidohydrolase (dut) from Lactococcus lactis subsp. lactis (strain IL1403) (Streptococcus lactis).